The following is a 269-amino-acid chain: 4-hydroxy-tetrahydrodipicolinate reductase (269 aa).

Residues 9–14 (GAGGRM) and glutamate 35 each bind NAD(+). Residue arginine 36 coordinates NADP(+). NAD(+) is bound by residues 98-100 (GTT) and 122-125 (ASNY). Catalysis depends on histidine 155, which acts as the Proton donor/acceptor. Residue histidine 156 coordinates (S)-2,3,4,5-tetrahydrodipicolinate. Lysine 159 functions as the Proton donor in the catalytic mechanism. 165 to 166 (GT) contacts (S)-2,3,4,5-tetrahydrodipicolinate.

This sequence belongs to the DapB family.

It is found in the cytoplasm. The catalysed reaction is (S)-2,3,4,5-tetrahydrodipicolinate + NAD(+) + H2O = (2S,4S)-4-hydroxy-2,3,4,5-tetrahydrodipicolinate + NADH + H(+). The enzyme catalyses (S)-2,3,4,5-tetrahydrodipicolinate + NADP(+) + H2O = (2S,4S)-4-hydroxy-2,3,4,5-tetrahydrodipicolinate + NADPH + H(+). Its pathway is amino-acid biosynthesis; L-lysine biosynthesis via DAP pathway; (S)-tetrahydrodipicolinate from L-aspartate: step 4/4. Catalyzes the conversion of 4-hydroxy-tetrahydrodipicolinate (HTPA) to tetrahydrodipicolinate. The protein is 4-hydroxy-tetrahydrodipicolinate reductase of Actinobacillus pleuropneumoniae serotype 7 (strain AP76).